The primary structure comprises 548 residues: Glucose-6-phosphate isomerase (548 aa).

Glu355 acts as the Proton donor in catalysis. Active-site residues include His386 and Lys511.

The protein belongs to the GPI family.

The protein resides in the cytoplasm. The enzyme catalyses alpha-D-glucose 6-phosphate = beta-D-fructose 6-phosphate. Its pathway is carbohydrate biosynthesis; gluconeogenesis. It participates in carbohydrate degradation; glycolysis; D-glyceraldehyde 3-phosphate and glycerone phosphate from D-glucose: step 2/4. Its function is as follows. Catalyzes the reversible isomerization of glucose-6-phosphate to fructose-6-phosphate. The sequence is that of Glucose-6-phosphate isomerase from Wigglesworthia glossinidia brevipalpis.